Consider the following 396-residue polypeptide: L-cysteine desulfidase (396 aa).

Catalysis depends on cysteine 23, which acts as the Proton acceptor. [4Fe-4S] cluster is bound by residues cysteine 287, cysteine 329, and cysteine 336.

This sequence belongs to the L-cysteine desulfidase family. In terms of assembly, homotrimer. Requires [4Fe-4S] cluster as cofactor.

It carries out the reaction L-cysteine + H2O = hydrogen sulfide + pyruvate + NH4(+) + H(+). Its function is as follows. Catalyzes the cleavage of L-cysteine to form 2-aminoprop-2-enoate and sulfide. The former then spontaneously hydrolyzes to pyruvate and NH(3). May be responsible for the production of sulfide required for the biosynthesis of iron-sulfur centers in this archaea. The protein is L-cysteine desulfidase of Methanococcus maripaludis (strain DSM 14266 / JCM 13030 / NBRC 101832 / S2 / LL).